The following is a 378-amino-acid chain: Metacaspase-1B (378 aa).

Residues 1–70 (MCSPPPYPPQ…QEAQSFGGGA (70 aa)) form a disordered region. Residues 10–29 (QGHHYPPSPHGSYYSPTPYG) show a composition bias toward low complexity. Residues histidine 169 and cysteine 225 contribute to the active site.

This sequence belongs to the peptidase C14B family.

Involved in cell death (apoptosis). The sequence is that of Metacaspase-1B (casB) from Aspergillus terreus (strain NIH 2624 / FGSC A1156).